Consider the following 276-residue polypeptide: MKRSLFGRVWPNVTAVVLFIGLVFPVYWMFATAFKPTGDIISENPVWFPTDITFEHFKTATEADHFWTYVSNSLIVTVCAVVFSLVIALAGSFALARMRFKGRRGFIVGFMLAQMAPWEVMVIAIYMIVRDASMLNSLVPLTLFYMMMILPFTILTLRGFVAAVPKELEESAMVDGCTRAQAFRRVILPLLAPGLMSTSMFGFITAWNELPLVLVVNKEAESQTLPLWLTSFQTVFGDNWGATMAASSLFAIPILILFVYLQRKAVSGLTAGAVKG.

6 helical membrane passes run 14 to 34, 74 to 94, 105 to 125, 137 to 157, 186 to 206, and 241 to 261; these read TAVV…ATAF, LIVT…GSFA, GFIV…VIAI, SLVP…ILTL, VILP…FITA, and GATM…FVYL. In terms of domain architecture, ABC transmembrane type-1 spans 70–261; sequence VSNSLIVTVC…IPILILFVYL (192 aa).

Belongs to the binding-protein-dependent transport system permease family. The complex is composed of two ATP-binding proteins (MsiK), two transmembrane proteins (DasB and DasC) and a solute-binding protein (DasA).

Its subcellular location is the cell membrane. In terms of biological role, part of the ABC transporter complex DasABC-MsiK involved in N,N'-diacetylchitobiose ((GlcNAc)2) uptake. Responsible for the translocation of the substrate across the membrane. The polypeptide is Diacetylchitobiose uptake system permease protein DasC (Streptomyces coelicolor (strain ATCC BAA-471 / A3(2) / M145)).